Consider the following 203-residue polypeptide: A-type ATP synthase subunit E (203 aa).

It belongs to the V-ATPase E subunit family. Has multiple subunits with at least A(3), B(3), C, D, E, F, H, I and proteolipid K(x).

The protein localises to the cell membrane. Component of the A-type ATP synthase that produces ATP from ADP in the presence of a proton gradient across the membrane. The polypeptide is A-type ATP synthase subunit E (Methanococcus maripaludis (strain C6 / ATCC BAA-1332)).